Reading from the N-terminus, the 415-residue chain is Serine hydroxymethyltransferase (415 aa).

(6S)-5,6,7,8-tetrahydrofolate-binding positions include Leu119 and Gly123–Leu125. Position 228 is an N6-(pyridoxal phosphate)lysine (Lys228).

This sequence belongs to the SHMT family. In terms of assembly, homodimer. It depends on pyridoxal 5'-phosphate as a cofactor.

It is found in the cytoplasm. It catalyses the reaction (6R)-5,10-methylene-5,6,7,8-tetrahydrofolate + glycine + H2O = (6S)-5,6,7,8-tetrahydrofolate + L-serine. It participates in one-carbon metabolism; tetrahydrofolate interconversion. Its pathway is amino-acid biosynthesis; glycine biosynthesis; glycine from L-serine: step 1/1. In terms of biological role, catalyzes the reversible interconversion of serine and glycine with tetrahydrofolate (THF) serving as the one-carbon carrier. This reaction serves as the major source of one-carbon groups required for the biosynthesis of purines, thymidylate, methionine, and other important biomolecules. Also exhibits THF-independent aldolase activity toward beta-hydroxyamino acids, producing glycine and aldehydes, via a retro-aldol mechanism. The sequence is that of Serine hydroxymethyltransferase from Coprothermobacter proteolyticus (strain ATCC 35245 / DSM 5265 / OCM 4 / BT).